Consider the following 300-residue polypeptide: Ribosomal protein L11 methyltransferase (300 aa).

T152, G173, D195, and N234 together coordinate S-adenosyl-L-methionine.

Belongs to the methyltransferase superfamily. PrmA family.

The protein resides in the cytoplasm. It catalyses the reaction L-lysyl-[protein] + 3 S-adenosyl-L-methionine = N(6),N(6),N(6)-trimethyl-L-lysyl-[protein] + 3 S-adenosyl-L-homocysteine + 3 H(+). Functionally, methylates ribosomal protein L11. The protein is Ribosomal protein L11 methyltransferase of Burkholderia cenocepacia (strain HI2424).